The primary structure comprises 250 residues: MLKPAIIIVPGALHRPEHYQGIVSRLHKLQYEAVAVSMPSLSSSPPQPTWTEDVEAIRKAIFKFSESGQDVVLVGHSYSGILISEASKGLSRKDLPHGEGAVVRLIYMCAIAVPVGESLTGQLEPRTPQEVEAFREEGSISLLDADKVRDVLYNKCEPKVADWAISLLGKQPVTTMSTPATHAAWLEIPSTYLICEDDLAVPECVQLRMAKQGNGAFDIVRCQEGHAPCLSNPDLVVRMIRNAAGEAIEI.

Residues Asp198 and His226 each act as charge relay system in the active site.

Belongs to the AB hydrolase superfamily.

Its pathway is secondary metabolite biosynthesis; terpenoid biosynthesis. Alpha/beta hydrolase; part of the gene cluster that mediates the biosynthesis of novofumigatonin, a heavily oxygenated meroterpenoid containing a unique orthoester moiety. The first step of the pathway is the synthesis of 3,5-dimethylorsellinic acid (DMOA) by the polyketide synthase nvfA via condensation of one acetyl-CoA starter unit with 3 malonyl-CoA units and 2 methylations. DMOA is then converted to farnesyl-DMOA by the farnesyltransferase nvfB. Epoxydation by FAD-dependent monooxygenase nvfK, followed by a protonation-initiated cyclization catalyzed by the terpene cyclase nvfL leads to the production of asnavolin H. The short chain dehydrogenase nvfC then as a 3-OH dehydrogenase of asnovolin H to yield chemesin D. There are two branches to synthesize asnovolin A from chemesin D. In one branch, chemesin D undergoes Baeyer-Villiger oxidation by nvfH, methylation by nvfJ, and enoyl reduction by the nvfM D enoylreductase that reduces the double bond between C-5'and C-6', to form respectively asnovolin I, asnovolin K, and asnovolin A. In the other branch, the methylation precedes the Baeyer-Villiger oxidation and the enoyl reduction to yield asnovolin A via the asnovolin J intermediate. Asnovolin A is further converted to fumigatonoid A by the Fe(II)/2-oxoglutarate-dependent dioxygenase nvfI that catalyzes an endoperoxidation reaction. The alpha/beta hydrolase nvfD then acts as an epimerase that converts fumigatonoid A to its C-5' epimer, which then undergoes spontaneous or nvfD-catalyzed lactonization. The following step utilizes the ketoreductase nvfG to produce fumigatonoid B. The dioxygenase nvfE further converts fumigatonoid B into fumigatonoid C. Finally the Fe(II)/2-oxoglutarate-dependent dioxygenase nvfF catalyzes two rounds of oxidation to transform fumigatonoid C into the end product, novofumigatonin A. In Aspergillus novofumigatus (strain IBT 16806), this protein is Alpha/beta hydrolase nvfD.